The chain runs to 586 residues: Isocitrate dehydrogenase kinase/phosphatase (586 aa).

ATP is bound by residues 316 to 322 and Lys-337; that span reads ARGDRGL. Asp-372 is a catalytic residue.

This sequence belongs to the AceK family.

The protein resides in the cytoplasm. It catalyses the reaction L-seryl-[isocitrate dehydrogenase] + ATP = O-phospho-L-seryl-[isocitrate dehydrogenase] + ADP + H(+). Its function is as follows. Bifunctional enzyme which can phosphorylate or dephosphorylate isocitrate dehydrogenase (IDH) on a specific serine residue. This is a regulatory mechanism which enables bacteria to bypass the Krebs cycle via the glyoxylate shunt in response to the source of carbon. When bacteria are grown on glucose, IDH is fully active and unphosphorylated, but when grown on acetate or ethanol, the activity of IDH declines drastically concomitant with its phosphorylation. The protein is Isocitrate dehydrogenase kinase/phosphatase of Anaeromyxobacter dehalogenans (strain 2CP-C).